The chain runs to 744 residues: Prestin (744 aa).

The Cytoplasmic portion of the chain corresponds to 1 to 75; it reads MDHAEENEIP…PITKWLPAYK (75 aa). The helical transmembrane segment at 76-105 threads the bilayer; sequence FKEYVLGDLVSGISTGVLQLPQGLAFAMLA. Residues 106 to 108 lie on the Extracellular side of the membrane; the sequence is AVP. A helical membrane pass occupies residues 109 to 126; sequence PVFGLYSSFYPVIMYCFF. At 127–137 the chain is on the cytoplasmic side; it reads GTSRHISIGPF. A helical transmembrane segment spans residues 138-151; it reads AVISLMIGGVAVRL. The Extracellular portion of the chain corresponds to 152-168; it reads VPDDIVIPGGVNATNGT. The short motif at 158-168 is the Involved in motor function element; the sequence is IPGGVNATNGT. 2 N-linked (GlcNAc...) asparagine glycosylation sites follow: Asn-163 and Asn-166. Residues 169 to 196 form a helical membrane-spanning segment; sequence EARDALRVKVAMSVTLLSGIIQFCLGVC. Residues 197-206 lie on the Cytoplasmic side of the membrane; it reads RFGFVAIYLT. Residues 207–230 traverse the membrane as a helical segment; the sequence is EPLVRGFTTAAAVHVFTSMLKYLF. Over 231 to 241 the chain is Extracellular; it reads GVKTKRYSGIF. An intramembrane region (helical) is located at residues 242 to 253; that stretch reads SVVYSTVAVLQN. Topologically, residues 254–258 are extracellular; that stretch reads VKNLN. The chain crosses the membrane as a helical span at residues 259-282; that stretch reads VCSLGVGLMVFGLLLGGKEFNERF. Topologically, residues 283-291 are cytoplasmic; sequence KEKLPAPIP. A helical membrane pass occupies residues 292–307; it reads LEFFAVVMGTGISAGF. Residues 308 to 332 lie on the Extracellular side of the membrane; the sequence is NLHESYSVDVVGTLPLGLLPPANPD. Residues 333–367 traverse the membrane as a helical segment; sequence TSLFHLVYVDAIAIAIVGFSVTISMAKTLANKHGY. Topologically, residues 368 to 370 are cytoplasmic; the sequence is QVD. Residues 371 to 388 form a helical membrane-spanning segment; sequence GNQELIALGICNSIGSLF. Topologically, residues 389-396 are extracellular; it reads QTFSISCS. Residues 397-406 traverse the membrane as a helical segment; that stretch reads LSRSLVQEGT. Ser-398 provides a ligand contact to salicylate. Residues 407–410 lie on the Cytoplasmic side of the membrane; that stretch reads GGKT. The helical transmembrane segment at 411 to 432 threads the bilayer; that stretch reads QLAGCLASLMILLVILATGFLF. Over 433-436 the chain is Extracellular; it reads ESLP. The helical transmembrane segment at 437–464 threads the bilayer; sequence QAVLSAIVIVNLKGMFMQFSDLPFFWRT. Ser-465 is a topological domain (cytoplasmic). The chain crosses the membrane as a helical span at residues 466–481; that stretch reads KIELTIWLTTFVSSLF. Over 482 to 483 the chain is Extracellular; the sequence is LG. A helical membrane pass occupies residues 484–504; the sequence is LDYGLITAVIIALLTVIYRTQ. The segment at 505-718 is extended region for STAS domain; that stretch reads SPSYKVLGQL…AVLGSQVREA (214 aa). Over 505 to 744 the chain is Cytoplasmic; the sequence is SPSYKVLGQL…PNATPTTPEA (240 aa). Residues 525–713 form the STAS domain; the sequence is AYEEVKEIPG…HSIHDAVLGS (189 aa). The tract at residues 720–744 is disordered; it reads AEQEATASLPQEDMEPNATPTTPEA.

Belongs to the SLC26A/SulP transporter (TC 2.A.53) family. In terms of assembly, homodimer. Interacts (via STAS domain) with CALM; this interaction is calcium-dependent and the STAS domain interacts with only one lobe of CALM which is an elongated conformation. Interacts with MYH1. As to expression, expressed in the outer hair cells (OHC) of the organ of Corti of the inner ear. Also weak expression in brain and testis. Very weakly expressed in heart, spleen, muscle and lactating mammary glands. Expressed in cardiac myocytes (at protein level), both in the surface sarcolemma and along the t-tubule. Weakly expressed in skeletal muscle cells (at protein level).

Its subcellular location is the lateral cell membrane. The catalysed reaction is 2 hydrogencarbonate(in) + chloride(out) = 2 hydrogencarbonate(out) + chloride(in). Its function is as follows. Voltage-sensitive motor protein that drives outer hair cell (OHC) electromotility (eM) and participates in sound amplification in the hearing organ. Converts changes in the transmembrane electric potential into mechanical displacements resulting in the coupling of its expansion to movement of a charged voltage sensor across the lipid membrane. The nature of the voltage sensor is not completely clear, and two models compete. In the first model, acts as an incomplete transporter where intracellular chloride anion acts as extrinsic voltage sensor that drives conformational change in the protein which is sufficient to produce a length change in the plane of the membrane and hence in the length of the OHC. The second model in which multiple charged amino acid residues are distributed at the intracellular and extracellular membrane interfaces that form an intrinsic voltage sensor, whose movement produces the non-linear capacitance (NLC). However, the effective voltage sensor may be the result of a hybrid voltage sensor, assembled from intrinsic charge (charged residues) and extrinsic charge (bound anion). Notably, binding of anions to the anion-binding pocket partially neutralizes the intrinsic positive charge rather than to form an electrically negative sensor, therefore remaining charge may serve as voltage sensor that, after depolarization, moves from down (expanded state) to up (contracted) conformation, which is accompanied by an eccentric contraction of the intermembrane cross-sectional area of the protein as well as a major increase in the hydrophobic thickness of the protein having as consequences the plasma membrane thickening and the cell contraction after membrane depolarization. The anion-binding pocket transits from the inward-open (Down) state, where it is exposed toward the intracellular solvent in the absence of anion, to the occluded (Up) state upon anion binding. Salicylate competes for the anion-binding site and inhibits the voltage-sensor movement, and therefore inhibits the charge transfer and electromotility by displacing Cl(-) from the anion-binding site and by preventing the structural transitions to the contracted state. In addition, can act as a weak Cl(-)/HCO3(-) antiporter across the cell membrane and so regulate the intracellular pH of the outer hair cells (OHCs), while firstly found as being unable to mediate electrogenic anion transport. Moreover, supports a role in cardiac mechanical amplification serving as an elastic element to enhance the actomyosin- based sarcomere contraction system. The protein is Prestin of Mus musculus (Mouse).